Consider the following 261-residue polypeptide: uncharacterized protein (261 aa).

The NADP(+) site is built by isoleucine 33, aspartate 78, and asparagine 105. The active-site Proton donor is the serine 157. Residues tyrosine 172, lysine 176, and serine 206 each contribute to the NADP(+) site. The active-site Proton acceptor is the tyrosine 172. Catalysis depends on lysine 176, which acts as the Lowers pKa of active site Tyr.

This sequence belongs to the short-chain dehydrogenases/reductases (SDR) family.

It localises to the cytoplasm. Its subcellular location is the nucleus. This is an uncharacterized protein from Schizosaccharomyces pombe (strain 972 / ATCC 24843) (Fission yeast).